The following is a 542-amino-acid chain: Probable protein kinase UbiB (542 aa).

Positions aspartate 123–methionine 505 constitute a Protein kinase domain. ATP contacts are provided by residues leucine 129–valine 137 and lysine 156. Catalysis depends on aspartate 291, which acts as the Proton acceptor. Residues isoleucine 506–leucine 526 form a helical membrane-spanning segment.

Belongs to the ABC1 family. UbiB subfamily.

Its subcellular location is the cell inner membrane. The protein operates within cofactor biosynthesis; ubiquinone biosynthesis [regulation]. Functionally, is probably a protein kinase regulator of UbiI activity which is involved in aerobic coenzyme Q (ubiquinone) biosynthesis. The polypeptide is Probable protein kinase UbiB (Haemophilus ducreyi (strain 35000HP / ATCC 700724)).